A 359-amino-acid polypeptide reads, in one-letter code: DNA replication and repair protein RecF (359 aa).

Gly30–Thr37 is a binding site for ATP.

This sequence belongs to the RecF family.

The protein resides in the cytoplasm. Functionally, the RecF protein is involved in DNA metabolism; it is required for DNA replication and normal SOS inducibility. RecF binds preferentially to single-stranded, linear DNA. It also seems to bind ATP. This chain is DNA replication and repair protein RecF, found in Vibrio parahaemolyticus serotype O3:K6 (strain RIMD 2210633).